The sequence spans 215 residues: Ras-related protein RAB1BV (215 aa).

Residues 22–29, 70–74, and 128–131 contribute to the GTP site; these read GDSGVGKS, DTAGQ, and NKAD. A disordered region spans residues 183–215; it reads DSDTRQEAQPSITIKPADQSGNQAAAKSACCGS. 2 S-geranylgeranyl cysteine lipidation sites follow: C212 and C213.

Belongs to the small GTPase superfamily. Rab family.

It localises to the cell membrane. This Beta vulgaris (Sugar beet) protein is Ras-related protein RAB1BV (RAB1BV).